Consider the following 1016-residue polypeptide: MQVSRRQFFKICAGGMAGTTAAALGFAPSVALAETRQYKLLRTRETRNTCTYCSVGCGLLMYSLGDGAKNAKASIFHIEGDPDHPVNRGALCPKGAGLVDFIHSESRLKFPEYRAPGSDKWQQISWEEAFDRIAKLMKEDRDANYIAQNAEGVTVNRWLSTGMLCASASSNETGYLTQKFSRALGMLAVDNQARVUHGPTVASLAPTFGRGAMTNHWVDIKNANLVVVMGGNAAEAHPVGFRWAMEAKIHNGAKLIVIDPRFTRTAAVADYYAPIRSGTDIAFLSGVLLYLLNNEKFNREYTEAYTNASLIVREDYGFEDGLFTGYDAEKRKYDKSSWTYELDENGFAKRDTTLQHPRCVWNLLKQHVSRYTPDVVENICGTPKDAFLKVCEYIAETSAHDKTASFLYALGWTQHSVGAQNIRTMAMIQLLLGNMGMAGGGVNALRGHSNIQGLTDLGLLSQSLPGYMTLPSEKQTDLQTYLTANTPKPLLEGQVNYWGNYPKFFVSMMKAFFGDKATAENSWGFDWLPKWDKGYDVLQYFEMMKEGKVNGYICQGFNPVASFPNKNKVIGCLSKLKFLVTIDPLNTETSNFWQNHGELNEVDSSKIQTEVFRLPSTCFAEENGSIVNSGRWLQWHWKGADAPGIALTDGEILSGIFLRLRKMYAEQGGANPDQVLNMTWNYAIPHEPSSEEVAMESNGKALADITDPATGAVIVKKGQQLSSFAQLRDDGTTSCGCWIFAGSWTPEGNQMARRDNADPSGLGNTLGWAWAWPLNRRILYNRASADPQGNPWDPKRQLLKWDGTKWTGWDIPDYSAAPPGSGVGPFIMQQEGMGRLFALDKMAEGPFPEHYEPFETPLGTNPLHPNVISNPAARIFKDDAEALGKADKFPYVGTTYRLTEHFHYWTKHALLNAILQPEQFVEIGESLANKLGIAQGDTVKVSSNRGYIKAKAVVTKRIRTLKANGKDIDTIGIPIHWGYEGVAKKGFIANTLTPFVGDANTQTPEFKSFLVNVEKV.

Positions 1–33 (MQVSRRQFFKICAGGMAGTTAAALGFAPSVALA) form a signal peptide, tat-type signal. One can recognise a 4Fe-4S Mo/W bis-MGD-type domain in the interval 43–106 (TRETRNTCTY…GLVDFIHSES (64 aa)). [4Fe-4S] cluster-binding residues include Cys-50, Cys-53, Cys-57, and Cys-92. Sec-196 is a non-standard amino acid (selenocysteine).

It belongs to the prokaryotic molybdopterin-containing oxidoreductase family. As to quaternary structure, formate dehydrogenase is a membrane-bound complex, formed by subunits alpha, beta and gamma. Mo-bis(molybdopterin guanine dinucleotide) is required as a cofactor. The cofactor is [4Fe-4S] cluster. Exported by the Tat system. The position of the signal peptide cleavage has not been experimentally proven.

It is found in the periplasm. The catalysed reaction is formate + NAD(+) = CO2 + NADH. Functionally, allows to use formate as major electron donor during aerobic respiration. Subunit alpha possibly forms the active site. This chain is Formate dehydrogenase-O major subunit (fdoG), found in Escherichia coli (strain K12).